Reading from the N-terminus, the 407-residue chain is Flagellar calcium-binding protein TB-44A (407 aa).

Residues 1–27 (MGCSASKDTTNSKDGAASKGGKDGKTT) form a disordered region. Residues 25–399 (KTTADRKVAW…LQVCGDPDGE (375 aa)) form a 2 X 186 AA almost perfect repeats region. Residues 48–83 (ESKSRRIELFKRFDTNGTGKLSFREVLDGCYSILKL) form the EF-hand 1 domain. Ca(2+)-binding residues include aspartate 61, asparagine 63, threonine 65, lysine 67, and glutamate 72. An ancestral calcium site 2 region spans residues 110–121 (GVGEEDLVEFLE). EF-hand domains lie at 130 to 165 (YDIFELTVMFDTMDKDGSLLLELQEFKEALPKWKEW), 167 to 202 (VDITDATTVFNEIDTNGSGVVTFDEFSCWAVTKKLQ), and 237 to 272 (ESKSRRIELFKQFDTNGTGKLGFREVLDGCYSILKL). Aspartate 143, aspartate 145, serine 147, glutamate 154, aspartate 180, asparagine 182, serine 184, glutamate 191, aspartate 250, asparagine 252, threonine 254, lysine 256, and glutamate 261 together coordinate Ca(2+). An ancestral calcium site 6 region spans residues 299–310 (GVGEEDLVEFLE). 2 consecutive EF-hand domains span residues 319–354 (YDIFELTVMFDTMDKDGSLLLELQEFKEALKKWKEW) and 356–391 (VDITDATTVFNEIDTNGSGVVTFDEFSCWAVTKKLQ). Residues aspartate 332, aspartate 334, serine 336, glutamate 343, aspartate 369, asparagine 371, serine 373, and glutamate 380 each coordinate Ca(2+).

This sequence belongs to the calflagin family.

It localises to the cell projection. The protein localises to the cilium. The protein resides in the flagellum. Its function is as follows. May contribute to the rapid motility of the trypanosomes, playing a role either in flagellar structure or in calcium metabolism. Could alternate between a GDP-bound inactive form to a calcium/GTP-bound active form. The sequence is that of Flagellar calcium-binding protein TB-44A from Trypanosoma brucei brucei.